A 142-amino-acid chain; its full sequence is Large ribosomal subunit protein uL13 (142 aa).

This sequence belongs to the universal ribosomal protein uL13 family. As to quaternary structure, part of the 50S ribosomal subunit.

Its function is as follows. This protein is one of the early assembly proteins of the 50S ribosomal subunit, although it is not seen to bind rRNA by itself. It is important during the early stages of 50S assembly. The polypeptide is Large ribosomal subunit protein uL13 (Pseudomonas putida (strain ATCC 700007 / DSM 6899 / JCM 31910 / BCRC 17059 / LMG 24140 / F1)).